The primary structure comprises 263 residues: Indole-3-glycerol phosphate synthase (263 aa).

It belongs to the TrpC family.

It carries out the reaction 1-(2-carboxyphenylamino)-1-deoxy-D-ribulose 5-phosphate + H(+) = (1S,2R)-1-C-(indol-3-yl)glycerol 3-phosphate + CO2 + H2O. The protein operates within amino-acid biosynthesis; L-tryptophan biosynthesis; L-tryptophan from chorismate: step 4/5. The chain is Indole-3-glycerol phosphate synthase from Aliarcobacter butzleri (strain RM4018) (Arcobacter butzleri).